A 105-amino-acid chain; its full sequence is Small ribosomal subunit protein eS10A (105 aa).

The protein belongs to the eukaryotic ribosomal protein eS10 family. As to quaternary structure, component of the small ribosomal subunit (SSU). Mature yeast ribosomes consist of a small (40S) and a large (60S) subunit. The 40S small subunit contains 1 molecule of ribosomal RNA (18S rRNA) and 33 different proteins (encoded by 57 genes). The large 60S subunit contains 3 rRNA molecules (25S, 5.8S and 5S rRNA) and 46 different proteins (encoded by 81 genes). eS10 interacts with GCN1 (via middle region); this interaction is direct and promotes GCN2 kinase activity. In terms of processing, the N-terminus is not modified.

The protein localises to the cytoplasm. Component of the ribosome, a large ribonucleoprotein complex responsible for the synthesis of proteins in the cell. The small ribosomal subunit (SSU) binds messenger RNAs (mRNAs) and translates the encoded message by selecting cognate aminoacyl-transfer RNA (tRNA) molecules. The large subunit (LSU) contains the ribosomal catalytic site termed the peptidyl transferase center (PTC), which catalyzes the formation of peptide bonds, thereby polymerizing the amino acids delivered by tRNAs into a polypeptide chain. The nascent polypeptides leave the ribosome through a tunnel in the LSU and interact with protein factors that function in enzymatic processing, targeting, and the membrane insertion of nascent chains at the exit of the ribosomal tunnel. eS10 plays a role as a positive regulator of the GCN2 kinase activity by stimulating GCN1-mediated GCN2 activation. This is Small ribosomal subunit protein eS10A from Saccharomyces cerevisiae (strain ATCC 204508 / S288c) (Baker's yeast).